Here is a 240-residue protein sequence, read N- to C-terminus: MRRIKVIFFDLDDTLVDTSKLAEVARKNAIENMIRHGMPVDFDTAYNELLELIKEYGSNFPYHFDYLLRRLDLEYNPKWVAAGVIAYHNTKFTYLREVPGARKTLLRLKKEGYMTGIITDGNPIKQWEKILRLELDDFFEHVMISDFEGVKKPHPKIFKKALKAFNVKPEEAIMVGDRLYSDIYGAKNVGMKTVWFKYGKYAELDLEYKEYADYVITELPQLLEVLERENGSDKEVHSSG.

It belongs to the HAD-like hydrolase superfamily. Mg(2+) is required as a cofactor.

In terms of biological role, catalyzes the dephosphorylation of D,L-glyceraldehyde 3-phosphate in vitro. In Pyrococcus furiosus (strain ATCC 43587 / DSM 3638 / JCM 8422 / Vc1), this protein is Glyceraldehyde 3-phosphate phosphatase.